The sequence spans 98 residues: Probable sodium channel toxin Ts27 (98 aa).

A signal peptide spans M1–G22. 4 cysteine pairs are disulfide-bonded: C36/C88, C40/C63, C49/C68, and C53/C70.

The protein belongs to the long (4 C-C) scorpion toxin superfamily. Sodium channel inhibitor family. As to expression, expressed by the venom gland.

It is found in the secreted. In terms of biological role, probable sodium channel toxin. This chain is Probable sodium channel toxin Ts27, found in Tityus serrulatus (Brazilian scorpion).